The chain runs to 379 residues: MSDFLPFSRPAMGAEELAAVKTVLDSGWITTGPKNQELEAAFCRLTGNQYAVAVSSATAGMHIALMALGIGEGDEVITPSMTWVSTLNMIVLLGATPVMVDVDRDTLMVTPEHIEAAITPQTKAIIPVHYAGAPADLDAIYALGERYGIPVIEDAAHATGTSYKGRHIGARGTAIFSFHAIKNITCAEGGIVVTDNPQFADKLRSLKFHGLGVDAWDRQCGGRAPQAEVLAPGYKYNLPDLNAAIALAQLQKLDALNARRAAIAAQYHQAMADLPFQPLSLPSWEHIHAWHLFIIRVDEARCGITRDALMASLKTKGIGTGLHFRAAHTQKYYRERFPTLTLPDTEWNSERICSLPLFPDMTESDFDRVITALHQIAGQ.

Lys182 is modified (N6-(pyridoxal phosphate)lysine).

The protein belongs to the DegT/DnrJ/EryC1 family. ArnB subfamily. Homodimer. The cofactor is pyridoxal 5'-phosphate.

It carries out the reaction UDP-4-amino-4-deoxy-beta-L-arabinose + 2-oxoglutarate = UDP-beta-L-threo-pentopyranos-4-ulose + L-glutamate. It functions in the pathway nucleotide-sugar biosynthesis; UDP-4-deoxy-4-formamido-beta-L-arabinose biosynthesis; UDP-4-deoxy-4-formamido-beta-L-arabinose from UDP-alpha-D-glucuronate: step 2/3. Its pathway is bacterial outer membrane biogenesis; lipopolysaccharide biosynthesis. Its function is as follows. Catalyzes the conversion of UDP-4-keto-arabinose (UDP-Ara4O) to UDP-4-amino-4-deoxy-L-arabinose (UDP-L-Ara4N). The modified arabinose is attached to lipid A and is required for resistance to polymyxin and cationic antimicrobial peptides. This is UDP-4-amino-4-deoxy-L-arabinose--oxoglutarate aminotransferase from Salmonella dublin (strain CT_02021853).